We begin with the raw amino-acid sequence, 363 residues long: Fructose-bisphosphate aldolase (363 aa).

Residues Arg56 and Lys147 each coordinate substrate. The active-site Proton acceptor is the Glu188. The active-site Schiff-base intermediate with dihydroxyacetone-P is Lys230.

Belongs to the class I fructose-bisphosphate aldolase family.

It catalyses the reaction beta-D-fructose 1,6-bisphosphate = D-glyceraldehyde 3-phosphate + dihydroxyacetone phosphate. It participates in carbohydrate degradation; glycolysis; D-glyceraldehyde 3-phosphate and glycerone phosphate from D-glucose: step 4/4. This chain is Fructose-bisphosphate aldolase (FBPA), found in Echinococcus multilocularis (Fox tapeworm).